A 439-amino-acid polypeptide reads, in one-letter code: Exodeoxyribonuclease 7 large subunit (439 aa).

It belongs to the XseA family. In terms of assembly, heterooligomer composed of large and small subunits.

The protein resides in the cytoplasm. The enzyme catalyses Exonucleolytic cleavage in either 5'- to 3'- or 3'- to 5'-direction to yield nucleoside 5'-phosphates.. Bidirectionally degrades single-stranded DNA into large acid-insoluble oligonucleotides, which are then degraded further into small acid-soluble oligonucleotides. This is Exodeoxyribonuclease 7 large subunit from Haemophilus influenzae (strain ATCC 51907 / DSM 11121 / KW20 / Rd).